Reading from the N-terminus, the 239-residue chain is Type III effector protein HopBA1 (239 aa).

Low complexity predominate over residues 1–20 (MLNRISSSSPTSYVSSGSSS). Residues 1-31 (MLNRISSSSPTSYVSSGSSSAGINPSINVRP) form a disordered region.

It localises to the secreted. It is found in the host cell. In terms of biological role, virulence factor recognized by the A.thaliana disease resistance protein RBA1, which triggers plant cell death. HopBA1 enhances RBA1 self-association, which is necessary for ectopic autoactivation of host cell death. This is Type III effector protein HopBA1 from Pseudomonas syringae pv. aptata.